The primary structure comprises 94 residues: Large ribosomal subunit protein uL23 (94 aa).

The protein belongs to the universal ribosomal protein uL23 family. As to quaternary structure, part of the 50S ribosomal subunit. Contacts protein L29, and trigger factor when it is bound to the ribosome.

In terms of biological role, one of the early assembly proteins it binds 23S rRNA. One of the proteins that surrounds the polypeptide exit tunnel on the outside of the ribosome. Forms the main docking site for trigger factor binding to the ribosome. The protein is Large ribosomal subunit protein uL23 of Treponema pallidum (strain Nichols).